A 119-amino-acid chain; its full sequence is Large ribosomal subunit protein bL20 (119 aa).

The protein belongs to the bacterial ribosomal protein bL20 family.

Its function is as follows. Binds directly to 23S ribosomal RNA and is necessary for the in vitro assembly process of the 50S ribosomal subunit. It is not involved in the protein synthesizing functions of that subunit. The sequence is that of Large ribosomal subunit protein bL20 from Thermoanaerobacter sp. (strain X514).